A 259-amino-acid polypeptide reads, in one-letter code: Probable ABC transporter permease protein RF_0080 (259 aa).

5 helical membrane passes run 13-35 (TIKF…SSII), 49-69 (LFIG…SGAV), 148-168 (VIAA…IGVM), 195-215 (PIDV…ISII), and 237-257 (AVVN…ELFF).

Belongs to the MlaE permease family.

The protein resides in the cell inner membrane. Functionally, could be part of an ABC transporter complex. The sequence is that of Probable ABC transporter permease protein RF_0080 from Rickettsia felis (strain ATCC VR-1525 / URRWXCal2) (Rickettsia azadi).